A 417-amino-acid polypeptide reads, in one-letter code: Glutamyl-tRNA reductase (417 aa).

Residues Thr-49–Arg-52, Ser-105, Glu-110–Gln-112, and Gln-116 contribute to the substrate site. Cys-50 serves as the catalytic Nucleophile. Gly-185–Ile-190 serves as a coordination point for NADP(+).

The protein belongs to the glutamyl-tRNA reductase family. As to quaternary structure, homodimer.

The enzyme catalyses (S)-4-amino-5-oxopentanoate + tRNA(Glu) + NADP(+) = L-glutamyl-tRNA(Glu) + NADPH + H(+). Its pathway is porphyrin-containing compound metabolism; protoporphyrin-IX biosynthesis; 5-aminolevulinate from L-glutamyl-tRNA(Glu): step 1/2. Its function is as follows. Catalyzes the NADPH-dependent reduction of glutamyl-tRNA(Glu) to glutamate 1-semialdehyde (GSA). The sequence is that of Glutamyl-tRNA reductase from Chromobacterium violaceum (strain ATCC 12472 / DSM 30191 / JCM 1249 / CCUG 213 / NBRC 12614 / NCIMB 9131 / NCTC 9757 / MK).